The following is a 31-amino-acid chain: AACYSSDCRVKCRAMGFSSGKCIDSKCKCYK.

3 cysteine pairs are disulfide-bonded: cysteine 3/cysteine 22, cysteine 8/cysteine 27, and cysteine 12/cysteine 29.

The protein belongs to the short scorpion toxin superfamily. Potassium channel inhibitor family. Alpha-KTx 19 subfamily. As to quaternary structure, monomer. As to expression, expressed by the venom gland.

It is found in the secreted. In terms of biological role, blocks voltage-gated potassium channels rKv1.1/KCNA1, rKv1.2/KCNA2, hKv1.3/KCNA3, rKv1.6/KCNA6 (IC(50)=75.9 nM) and, to a lesser extent, Shaker IR (with the inactivation domain removed). This chain is Potassium channel toxin alpha-KTx 19.2, found in Buthus occitanus tunetanus (Common European scorpion).